Reading from the N-terminus, the 336-residue chain is HTH-type transcriptional repressor PurR (336 aa).

The HTH lacI-type domain maps to 2-56 (ATIKDVAKLAGVSTTTVSHVINKTRFVAEDTSKAVWDAIQQLNYSPSAVARSLKV). Positions 4-23 (IKDVAKLAGVSTTTVSHVIN) form a DNA-binding region, H-T-H motif. The DNA-binding element occupies 48–56 (SAVARSLKV). Residues Tyr73, Lys188, Phe219, and Asp273 each contribute to the hypoxanthine site.

As to quaternary structure, homodimer.

It participates in purine metabolism; purine nucleotide biosynthesis [regulation]. In terms of biological role, is the main repressor of the genes involved in the de novo synthesis of purine nucleotides, regulating purB, purC, purEK, purF, purHD, purL, purMN and guaBA expression. PurR is allosterically activated to bind its cognate DNA by binding the purine corepressors, hypoxanthine or guanine, thereby effecting transcription repression. This chain is HTH-type transcriptional repressor PurR, found in Actinobacillus pleuropneumoniae serotype 3 (strain JL03).